Consider the following 469-residue polypeptide: Dihydrolipoyl dehydrogenase (469 aa).

FAD is bound by residues Glu34–Cys42, Lys51, and Gly114. The cysteines at positions 42 and 47 are disulfide-linked. NAD(+) contacts are provided by residues Gly179 to Ile183, Glu202, and Ser269 to Phe272. FAD is bound by residues Asp312 and Ala320. His448 (proton acceptor) is an active-site residue.

This sequence belongs to the class-I pyridine nucleotide-disulfide oxidoreductase family. In terms of assembly, homodimer. Part of an unusual ODH/PDH supercomplex, consisting of AceE (E1), AceF (E2), and Lpd (E3) together with OdhA (E1+E2). Requires FAD as cofactor.

The protein localises to the cytoplasm. It carries out the reaction N(6)-[(R)-dihydrolipoyl]-L-lysyl-[protein] + NAD(+) = N(6)-[(R)-lipoyl]-L-lysyl-[protein] + NADH + H(+). It participates in carbohydrate metabolism; tricarboxylic acid cycle; succinyl-CoA from 2-oxoglutarate (dehydrogenase route): step 1/1. Functionally, lipoamide dehydrogenase is an essential component of the pyruvate dehydrogenase (PDH) and 2-oxoglutarate dehydrogenase (ODH) complexes. Catalyzes the reoxidation of dihydrolipoyl groups which are covalently attached to the lipoate acyltransferase components (E2) of the complexes. Also catalyzes a reversible NADH:NAD(+) transhydrogenation, and is able to transfer electrons from NADH to various redox-active compounds and quinones. May be involved in quinone redox cycling in C.glutamicum. In Corynebacterium glutamicum (strain ATCC 13032 / DSM 20300 / JCM 1318 / BCRC 11384 / CCUG 27702 / LMG 3730 / NBRC 12168 / NCIMB 10025 / NRRL B-2784 / 534), this protein is Dihydrolipoyl dehydrogenase (lpd).